We begin with the raw amino-acid sequence, 162 residues long: Regulatory protein RecX (162 aa).

It belongs to the RecX family.

Its subcellular location is the cytoplasm. In terms of biological role, modulates RecA activity. The chain is Regulatory protein RecX from Xanthomonas axonopodis pv. citri (strain 306).